The chain runs to 747 residues: Eukaryotic translation initiation factor 3 subunit B (747 aa).

An RRM domain is found at 42–128; it reads AFVVVDGLPE…HTLRVNKLTD (87 aa). WD repeat units follow at residues 195–234, 236–292, 310–349, 520–563, and 578–623; these read DRQHWTETFVQWSPLGTYLTSVHAQGVQLWGGPSWTRQRR, AHPF…PLRS, APKFPWPAFKWSADDKYVARLNPGQSISVYELPRMNLLDK, LEKK…EKPE, and ADHY…LREE.

This sequence belongs to the eIF-3 subunit B family. As to quaternary structure, component of the eukaryotic translation initiation factor 3 (eIF-3) complex.

The protein resides in the cytoplasm. Functionally, RNA-binding component of the eukaryotic translation initiation factor 3 (eIF-3) complex, which is involved in protein synthesis of a specialized repertoire of mRNAs and, together with other initiation factors, stimulates binding of mRNA and methionyl-tRNAi to the 40S ribosome. The eIF-3 complex specifically targets and initiates translation of a subset of mRNAs involved in cell proliferation. The protein is Eukaryotic translation initiation factor 3 subunit B (prt-1) of Neurospora crassa (strain ATCC 24698 / 74-OR23-1A / CBS 708.71 / DSM 1257 / FGSC 987).